The following is a 20-amino-acid chain: Photosystem II stability/assembly factor HCF136, chloroplastic (20 aa).

Belongs to the Ycf48 family.

It localises to the plastid. It is found in the chloroplast thylakoid lumen. Functionally, essential for photosystem II (PSII) biogenesis; required for assembly of an early intermediate in PSII assembly that includes D2 (psbD) and cytochrome b559. This chain is Photosystem II stability/assembly factor HCF136, chloroplastic, found in Spinacia oleracea (Spinach).